Reading from the N-terminus, the 403-residue chain is Anti-sigma-I factor RsgI8 (403 aa).

Residues 1 to 59 (MTKQKGTILKLKNNLAIIMTSDCKIVSIKRQPGMYEGLEISFNKNEIINKKNKLAFYSR) lie on the Cytoplasmic side of the membrane. The RsgI N-terminal anti-sigma domain occupies 4-51 (QKGTILKLKNNLAIIMTSDCKIVSIKRQPGMYEGLEISFNKNEIINKK). A helical membrane pass occupies residues 60 to 80 (IAAGIAAIFIIMVISFNLFNN). At 81 to 403 (NDVYAYVAID…KAKNSIEKMP (323 aa)) the chain is on the extracellular side. Basic and acidic residues-rich tracts occupy residues 254–314 (VHNV…EPAK), 324–335 (LPKDKTIPEEKT), and 349–403 (VEPK…EKMP). A disordered region spans residues 254-403 (VHNVKKEEPK…KAKNSIEKMP (150 aa)).

Interacts (via RsgI N-terminal anti-sigma domain) with SigI8.

It localises to the cell membrane. In terms of biological role, anti-sigma factor for SigI8. Negatively regulates SigI8 activity through direct interaction. This Acetivibrio thermocellus (strain ATCC 27405 / DSM 1237 / JCM 9322 / NBRC 103400 / NCIMB 10682 / NRRL B-4536 / VPI 7372) (Clostridium thermocellum) protein is Anti-sigma-I factor RsgI8.